The chain runs to 689 residues: Glycine--tRNA ligase beta subunit (689 aa).

The protein belongs to the class-II aminoacyl-tRNA synthetase family. In terms of assembly, tetramer of two alpha and two beta subunits.

It is found in the cytoplasm. It catalyses the reaction tRNA(Gly) + glycine + ATP = glycyl-tRNA(Gly) + AMP + diphosphate. This is Glycine--tRNA ligase beta subunit from Edwardsiella ictaluri (strain 93-146).